The primary structure comprises 586 residues: Ezrin (586 aa).

The 294-residue stretch at 2 to 295 (PKPINVRVTT…GNHELYMRRR (294 aa)) folds into the FERM domain. Lysine 60 carries the N6-acetyllysine modification. The short motif at 115–120 (IYCPPE) is the [IL]-x-C-x-x-[DE] motif element. The residue at position 146 (tyrosine 146) is a Phosphotyrosine; by PDGFR. Residues 244 to 586 (EIRNISFNDK…KQRIDEFEAM (343 aa)) are interaction with SCYL3. Residues 302-462 (VQQMKAQARE…QDDLVKTKEE (161 aa)) are a coiled coil. The interval 305–340 (MKAQAREEKHQKQLERQQLESEKKRREAVEQEKEQM) is disordered. The span at 308-340 (QAREEKHQKQLERQQLESEKKRREAVEQEKEQM) shows a compositional bias: basic and acidic residues. Residue tyrosine 354 is modified to Phosphotyrosine; by PDGFR. Serine 366 carries the post-translational modification Phosphoserine. Residue tyrosine 478 is modified to Phosphotyrosine. Serine 535 carries the phosphoserine modification. Threonine 567 carries the phosphothreonine; by ROCK2 and PKC/PRKCI modification.

In terms of assembly, interacts with PALS1. Found in a complex with EZR, PODXL and NHERF2. Interacts with MCC, PLEKHG6, PODXL, SCYL3/PACE1, NHERF1, NHERF2 and TMEM8B. Interacts (when phosphorylated) with FES/FPS. Interacts with dimeric S100P, the interaction may be activating through unmasking of F-actin binding sites. Identified in complexes that contain VIM, EZR, AHNAK, BFSP1, BFSP2, ANK2, PLEC, PRX and spectrin. Detected in a complex composed of at least EZR, AHNAK, PPL and PRX. Interacts with PDPN (via cytoplasmic domain); activates RHOA and promotes epithelial-mesenchymal transition. Interacts with SPN/CD43 cytoplasmic tail, CD44 and ICAM2. Interacts with SLC9A3; interaction targets SLC9A3 to the apical membrane. Interacts with SLC9A1; regulates interactions of SLC9A1 with cytoskeletal and promotes stress fiber formation. Interacts with CLIC5; may work together in a complex which also includes RDX and MYO6 to stabilize linkages between the plasma membrane and subjacent actin cytoskeleton at the base of stereocilia. In terms of processing, phosphorylated by tyrosine-protein kinases. Phosphorylation by ROCK2 suppresses the head-to-tail association of the N-terminal and C-terminal halves resulting in an opened conformation which is capable of actin and membrane-binding. S-nitrosylation is induced by interferon-gamma and oxidatively-modified low-densitity lipoprotein (LDL(ox)) possibly implicating the iNOS-S100A8/9 transnitrosylase complex.

The protein localises to the apical cell membrane. It localises to the cell projection. The protein resides in the microvillus membrane. Its subcellular location is the ruffle membrane. It is found in the cytoplasm. The protein localises to the cell cortex. It localises to the cytoskeleton. The protein resides in the microvillus. Its activity is regulated as follows. A head-to-tail association, of the N-terminal and C-terminal halves results in a closed conformation (inactive form) which is incapable of actin or membrane-binding. In terms of biological role, probably involved in connections of major cytoskeletal structures to the plasma membrane. In epithelial cells, required for the formation of microvilli and membrane ruffles on the apical pole. Along with PLEKHG6, required for normal macropinocytosis. This is Ezrin (EZR) from Oryctolagus cuniculus (Rabbit).